The following is a 42-amino-acid chain: Putative protein RNF216-like (42 aa).

This chain is Putative protein RNF216-like (RNF216P1), found in Homo sapiens (Human).